The following is a 319-amino-acid chain: D-alanine--D-alanine ligase (319 aa).

Residues 1 to 23 are disordered; the sequence is MTGPEWAHTRGTKVGQSSRTPPK. The ATP-grasp domain occupies 120-313; sequence KDAFVAAGLP…FGKLCAWMVE (194 aa). 147–197 serves as a coordination point for ATP; it reads MQPPYVVKPNNEGSSVGVYLVHEAANGPPQLSEDMPQEVMVEAFAPGRELT. 3 residues coordinate Mg(2+): Asp264, Glu280, and Asn282.

It belongs to the D-alanine--D-alanine ligase family. It depends on Mg(2+) as a cofactor. Requires Mn(2+) as cofactor.

It localises to the cytoplasm. The catalysed reaction is 2 D-alanine + ATP = D-alanyl-D-alanine + ADP + phosphate + H(+). The protein operates within cell wall biogenesis; peptidoglycan biosynthesis. Cell wall formation. In Roseobacter denitrificans (strain ATCC 33942 / OCh 114) (Erythrobacter sp. (strain OCh 114)), this protein is D-alanine--D-alanine ligase.